The sequence spans 303 residues: tRNA dimethylallyltransferase 1 (303 aa).

Residue 9–16 participates in ATP binding; sequence GPTASGKT. 11–16 is a binding site for substrate; the sequence is TASGKT. Interaction with substrate tRNA regions lie at residues 34-37, 158-162, and 239-244; these read DSAL, QRLIR, and RCVGYR.

It belongs to the IPP transferase family. As to quaternary structure, monomer. Mg(2+) is required as a cofactor.

The catalysed reaction is adenosine(37) in tRNA + dimethylallyl diphosphate = N(6)-dimethylallyladenosine(37) in tRNA + diphosphate. Its function is as follows. Catalyzes the transfer of a dimethylallyl group onto the adenine at position 37 in tRNAs that read codons beginning with uridine, leading to the formation of N6-(dimethylallyl)adenosine (i(6)A). The chain is tRNA dimethylallyltransferase 1 from Shewanella sediminis (strain HAW-EB3).